A 448-amino-acid chain; its full sequence is tRNA(Ile)-lysidine synthase (448 aa).

Position 28-33 (28-33 (STGVDS)) interacts with ATP.

It belongs to the tRNA(Ile)-lysidine synthase family.

It localises to the cytoplasm. It catalyses the reaction cytidine(34) in tRNA(Ile2) + L-lysine + ATP = lysidine(34) in tRNA(Ile2) + AMP + diphosphate + H(+). Ligates lysine onto the cytidine present at position 34 of the AUA codon-specific tRNA(Ile) that contains the anticodon CAU, in an ATP-dependent manner. Cytidine is converted to lysidine, thus changing the amino acid specificity of the tRNA from methionine to isoleucine. The chain is tRNA(Ile)-lysidine synthase from Lactiplantibacillus plantarum (strain ATCC BAA-793 / NCIMB 8826 / WCFS1) (Lactobacillus plantarum).